The primary structure comprises 187 residues: Preprocaerulein clone PXC202 (187 aa).

Positions 1 to 9 (NDERRFADG) are excised as a propeptide. Residues 1 to 21 (NDERRFADGQQDYTGWMDFGR) form a disordered region. At Tyr-13 the chain carries Sulfotyrosine. Phe-19 is subject to Phenylalanine amide. Residues 23-73 (DDEDDVNERDVRGFGSFLGKALKAALKIGANALGGSPQQREANDERRFADG) constitute a propeptide that is removed on maturation. The residue at position 77 (Tyr-77) is a Sulfotyrosine. A Phenylalanine amide modification is found at Phe-83. Residues 87–137 (DDEDDVNERDVRGFGSFLGKALKAALKIGANALGGSLQQREVNDERRFADG) constitute a propeptide that is removed on maturation. Tyr-141 is subject to Sulfotyrosine. Phe-147 bears the Phenylalanine amide mark. Residues 151–152 (DG) constitute a propeptide that is removed on maturation. Tyr-156 is modified (sulfotyrosine). The residue at position 162 (Phe-162) is a Phenylalanine amide. Positions 166-187 (DDEDDVHERDVRGFGSFLGKAL) are excised as a propeptide.

It belongs to the gastrin/cholecystokinin family. In terms of tissue distribution, expressed by the skin glands.

The protein resides in the secreted. The pharmacological activities of caerulein are quite similar to the physiological activities of gastrin and related peptides. The protein is Preprocaerulein clone PXC202 of Xenopus laevis (African clawed frog).